The following is a 141-amino-acid chain: Hemoglobin subunit alpha-1/2 (141 aa).

In terms of domain architecture, Globin spans 1–141 (VLSPADKTNV…VSTVLTSKYR (141 aa)). The residue at position 3 (Ser-3) is a Phosphoserine. The residue at position 7 (Lys-7) is an N6-succinyllysine. Phosphothreonine is present on Thr-8. Position 11 is an N6-succinyllysine (Lys-11). Lys-16 is modified (N6-acetyllysine; alternate). Position 16 is an N6-succinyllysine; alternate (Lys-16). Position 24 is a phosphotyrosine (Tyr-24). Ser-35 is modified (phosphoserine). Lys-40 bears the N6-succinyllysine mark. Ser-49 bears the Phosphoserine mark. Residue His-58 coordinates O2. His-87 serves as a coordination point for heme b. A Phosphoserine modification is found at Ser-102. Thr-108 bears the Phosphothreonine mark. Ser-124 bears the Phosphoserine mark. Phosphothreonine occurs at positions 134 and 137. A Phosphoserine modification is found at Ser-138.

It belongs to the globin family. In terms of assembly, heterotetramer of two alpha chains and two beta chains. In terms of tissue distribution, red blood cells.

Involved in oxygen transport from the lung to the various peripheral tissues. In Mustela lutreola (European mink), this protein is Hemoglobin subunit alpha-1/2.